Reading from the N-terminus, the 187-residue chain is Ribosome maturation factor RimM (187 aa).

The PRC barrel domain maps to 94–168 (DDEFYHADLV…RVIVDMPDGL (75 aa)). Positions 167-187 (GLIGGDKPDTSDTAPLGQDFD) are disordered.

The protein belongs to the RimM family. Binds ribosomal protein uS19.

It localises to the cytoplasm. Functionally, an accessory protein needed during the final step in the assembly of 30S ribosomal subunit, possibly for assembly of the head region. Essential for efficient processing of 16S rRNA. May be needed both before and after RbfA during the maturation of 16S rRNA. It has affinity for free ribosomal 30S subunits but not for 70S ribosomes. This chain is Ribosome maturation factor RimM, found in Jannaschia sp. (strain CCS1).